Here is a 272-residue protein sequence, read N- to C-terminus: Indole-3-glycerol phosphate synthase (272 aa).

It belongs to the TrpC family.

The catalysed reaction is 1-(2-carboxyphenylamino)-1-deoxy-D-ribulose 5-phosphate + H(+) = (1S,2R)-1-C-(indol-3-yl)glycerol 3-phosphate + CO2 + H2O. The protein operates within amino-acid biosynthesis; L-tryptophan biosynthesis; L-tryptophan from chorismate: step 4/5. In Mycobacterium ulcerans (strain Agy99), this protein is Indole-3-glycerol phosphate synthase.